The sequence spans 322 residues: Serine protease 38 (322 aa).

Residues 1–28 form the signal peptide; the sequence is MAALTSGLGVLGYLLFPLLLASPTWVTS. The propeptide at 29 to 55 is activation peptide; sequence VSRRHPKSQANSLSGDVACGQPVLQGK. The 234-residue stretch at 56-289 folds into the Peptidase S1 domain; that stretch reads LLGGEFARDR…FLSWIRYHLQ (234 aa). Cysteines 81 and 97 form a disulfide. Residues histidine 96 and aspartate 146 each act as charge relay system in the active site. A glycan (N-linked (GlcNAc...) asparagine) is linked at asparagine 176. 3 cysteine pairs are disulfide-bonded: cysteine 179–cysteine 247, cysteine 210–cysteine 226, and cysteine 237–cysteine 265. Serine 241 (charge relay system) is an active-site residue. Residues asparagine 250 and asparagine 276 are each glycosylated (N-linked (GlcNAc...) asparagine).

The protein belongs to the peptidase S1 family.

It is found in the secreted. The sequence is that of Serine protease 38 (Prss38) from Mus musculus (Mouse).